A 281-amino-acid polypeptide reads, in one-letter code: TIP41-like protein (281 aa).

This sequence belongs to the TIP41 family.

In Caenorhabditis elegans, this protein is TIP41-like protein.